We begin with the raw amino-acid sequence, 239 residues long: MPLGHIMRLDLEKIALEYIVPCLHEVGFCYLDNFLGEVVGDCVLERVKQLHYNGALRDGQLAGPRAGVSKRHLRGDQITWIGGNEEGCEAINFLLSLIDRLVLYCGSRLGKYYVKERSKAMVACYPGNGTGYVRHVDNPNGDGRCITCIYYLNKNWDAKLHGGVLRIFPEGKSFVADVEPIFDRLLFSWSDRRNPHEVQPSYATRYAMTVWYFDAEERAEAKKKFRNLTRKTESALAKD.

A beta(2)beta(3) 'finger-like' loop region spans residues 62-73 (AGPRAGVSKRHL). A required for interaction with ADRB2 region spans residues 88–104 (CEAINFLLSLIDRLVLY). The Fe2OG dioxygenase domain maps to 116–214 (ERSKAMVACY…RYAMTVWYFD (99 aa)). Residues His-135, Asp-137, and His-196 each contribute to the Fe cation site. Position 205 (Arg-205) interacts with 2-oxoglutarate.

Interacts with ADRB2; the interaction hydroxylates ADRB2 facilitating its ubiquitination by the VHL-E3 ligase complex. Interacts with PAX2; the interaction targets PAX2 for destruction. Interacts with PKM; the interaction hydroxylates PKM in hypoxia. Interacts with WDR83; the interaction leads to almost complete elimination of HIF-mediated reporter activity. Interacts with BCL2 (via its BH4 domain); the interaction disrupts the BAX-BCL4 complex inhibiting the anti-apoptotic activity of BCL2. The cofactor is Fe(2+). L-ascorbate is required as a cofactor. Post-translationally, ubiquitinated by SIAH1 and/or SIAH2 in response to the unfolded protein response (UPR), leading to its degradation. In terms of tissue distribution, highly expressed in vascular smooth muscle. Moderately expressed in esophagus, stomach, small bowel and aorta. Low levels in tail and kidney. Expression also in pheochromocytoma cell line PC-12.

It localises to the nucleus. The protein localises to the cytoplasm. The enzyme catalyses L-prolyl-[protein] + 2-oxoglutarate + O2 = trans-4-hydroxy-L-prolyl-[protein] + succinate + CO2. The catalysed reaction is L-prolyl-[hypoxia-inducible factor alpha subunit] + 2-oxoglutarate + O2 = trans-4-hydroxy-L-prolyl-[hypoxia-inducible factor alpha subunit] + succinate + CO2. Its function is as follows. Prolyl hydroxylase that mediates hydroxylation of proline residues in target proteins, such as PKM, TELO2, ATF4 and HIF1A. Target proteins are preferentially recognized via a LXXLAP motif. Cellular oxygen sensor that catalyzes, under normoxic conditions, the post-translational formation of 4-hydroxyproline in hypoxia-inducible factor (HIF) alpha proteins. Hydroxylates a specific proline found in each of the oxygen-dependent degradation (ODD) domains (N-terminal, NODD, and C-terminal, CODD) of HIF1A. Also hydroxylates HIF2A. Has a preference for the CODD site for both HIF1A and HIF2A. Hydroxylation on the NODD site by EGLN3 appears to require prior hydroxylation on the CODD site. Hydroxylated HIFs are then targeted for proteasomal degradation via the von Hippel-Lindau ubiquitination complex. Under hypoxic conditions, the hydroxylation reaction is attenuated allowing HIFs to escape degradation resulting in their translocation to the nucleus, heterodimerization with HIF1B, and increased expression of hypoxy-inducible genes. ELGN3 is the most important isozyme in limiting physiological activation of HIFs (particularly HIF2A) in hypoxia. Also hydroxylates PKM in hypoxia, limiting glycolysis. Under normoxia, hydroxylates and regulates the stability of ADRB2. Regulator of cardiomyocyte and neuronal apoptosis. In cardiomyocytes, inhibits the anti-apoptotic effect of BCL2 by disrupting the BAX-BCL2 complex. In neurons, has a NGF-induced proapoptotic effect, probably through regulating CASP3 activity. Also essential for hypoxic regulation of neutrophilic inflammation. Plays a crucial role in DNA damage response (DDR) by hydroxylating TELO2, promoting its interaction with ATR which is required for activation of the ATR/CHK1/p53 pathway. Also mediates hydroxylation of ATF4, leading to decreased protein stability of ATF4. This Rattus norvegicus (Rat) protein is Prolyl hydroxylase EGLN3 (Egln3).